A 249-amino-acid polypeptide reads, in one-letter code: Type I iodothyronine deiodinase (249 aa).

Over 1–12 (MELPLPGLWLKR) the chain is Extracellular. The chain crosses the membrane as a helical; Signal-anchor for type III membrane protein span at residues 13 to 33 (LWVLFQVALHVAMGKVLMTLF). Topologically, residues 34-249 (PGRVKQDILA…VRAVLEKLHS (216 aa)) are cytoplasmic. Residue Sec-126 is part of the active site. Position 126 (Sec-126) is a non-standard amino acid, selenocysteine.

The protein belongs to the iodothyronine deiodinase family. Predominantly monomer. Can form homodimers but homodimerization is not essential for enzyme activity.

It is found in the cell membrane. The protein localises to the endoplasmic reticulum membrane. It localises to the basolateral cell membrane. The enzyme catalyses 3,3',5-triiodo-L-thyronine + iodide + A + H(+) = L-thyroxine + AH2. The catalysed reaction is 3,3',5'-triiodo-L-thyronine + iodide + A + H(+) = L-thyroxine + AH2. It carries out the reaction 3,3'-diiodo-L-thyronine + iodide + A + H(+) = 3,3',5'-triiodo-L-thyronine + AH2. It catalyses the reaction 3,3'-diiodo-L-thyronine + iodide + A + H(+) = 3,3',5-triiodo-L-thyronine + AH2. The enzyme catalyses 3'-iodo-L-thyronine + iodide + A + H(+) = 3',5'-diiodo-L-thyronine + AH2. The catalysed reaction is 3-iodo-L-thyronine + iodide + A + H(+) = 3,5-diiodo-L-thyronine + AH2. It carries out the reaction 3-iodo-L-thyronine + iodide + A + H(+) = 3,3'-diiodo-L-thyronine + AH2. It catalyses the reaction 3,3'-diiodothyronamine + iodide + A + H(+) = 3,3',5'-triiodothyronamine + AH2. The enzyme catalyses 3'-iodothyronamine + iodide + A + H(+) = 3',5'-diiodothyronamine + AH2. The catalysed reaction is 3-iodothyronamine + iodide + A + H(+) = 3,3'-diiodothyronamine + AH2. It carries out the reaction 3,3'-diiodothyronamine + iodide + A + H(+) = 3,3',5-triiodothyronamine + AH2. It catalyses the reaction 3-iodothyronamine + iodide + A + H(+) = 3,5-diiodothyronamine + AH2. The enzyme catalyses 3,3'-diiodo-L-thyronine sulfate + iodide + A + H(+) = 3,3',5'-triiodo-L-thyronine sulfate + AH2. The catalysed reaction is 3,3',5'-triiodo-L-thyronine sulfate + iodide + A + H(+) = L-thyroxine sulfate + AH2. It carries out the reaction 3,3'-diiodo-L-thyronine sulfate + iodide + A + H(+) = 3,3',5-triiodo-L-thyronine sulfate + AH2. Its function is as follows. Plays a crucial role in the metabolism of thyroid hormones (TH) and has specific roles in TH activation and inactivation by deiodination. Catalyzes the deiodination of L-thyroxine (T4) to 3,5,3'-triiodothyronine (T3) and 3,3',5'-triiodothyronine (rT3) to 3,3'-diiodothyronine (3,3'-T2) via outer-ring deiodination (ORD). Catalyzes the deiodination of T4 to rT3, T3 to 3,3'-T2, 3,5-diiodothyronine (3,5-T2) to 3-monoiodothyronine (3-T1) and 3,3'-T2 to 3-T1 via inner-ring deiodination (IRD). Catalyzes the deiodination of 3',5'-diiodothyronine (3',5'-T2) to 3'-monoiodothyronine (3'-T1) via ORD. Catalyzes the phenolic ring deiodinations of 3,3',5'-triiodothyronamine, 3',5'-diiodothyronamine and 3,3'-diiodothyronamine as well as tyrosyl ring deiodinations of 3,5,3'-triiodothyronamine and 3,5-diiodothyronamine. Catalyzes the deiodination of L-thyroxine sulfate and 3,3',5-triiodo-L-thyronine sulfate via IRD and of 3,3',5'-triiodo-L-thyronine sulfate via ORD. In Sus scrofa (Pig), this protein is Type I iodothyronine deiodinase (DIO1).